The primary structure comprises 171 residues: Secreted thaumatin-like protein calA (171 aa).

The first 18 residues, 1 to 18 (MLFNKIISLAATLATASA), serve as a signal peptide directing secretion. N-linked (GlcNAc...) asparagine glycans are attached at residues N37 and N141. Disulfide bonds link C130/C157 and C135/C142.

The protein belongs to the thaumatin family.

It localises to the secreted. The protein localises to the extracellular space. It is found in the extracellular matrix. Its subcellular location is the cell wall. In terms of biological role, secreted thaumatin-like protein that, with cetA, plays an essential role in early conidial germination with a possible role in cell wall remodeling. The chain is Secreted thaumatin-like protein calA from Emericella nidulans (strain FGSC A4 / ATCC 38163 / CBS 112.46 / NRRL 194 / M139) (Aspergillus nidulans).